Consider the following 493-residue polypeptide: Alpha-amylase-related protein (493 aa).

Residues 1–19 form the signal peptide; that stretch reads MFKFALALTLCLAGSLSLA. A Pyrrolidone carboxylic acid modification is found at glutamine 20. Residues cysteine 47 and cysteine 103 are joined by a disulfide bond. Residues asparagine 117, glutamine 168, and aspartate 177 each contribute to the Ca(2+) site. The cysteines at positions 156 and 170 are disulfide-linked. Arginine 205 contacts chloride. The active-site Nucleophile is the aspartate 207. Histidine 211 lines the Ca(2+) pocket. Glutamate 244 functions as the Proton donor in the catalytic mechanism. Chloride is bound by residues asparagine 307 and arginine 342. Disulfide bonds link cysteine 375-cysteine 381, cysteine 417-cysteine 440, and cysteine 447-cysteine 459.

This sequence belongs to the glycosyl hydrolase 13 family. Monomer. Ca(2+) is required as a cofactor. The cofactor is chloride.

Its subcellular location is the secreted. The enzyme catalyses Endohydrolysis of (1-&gt;4)-alpha-D-glucosidic linkages in polysaccharides containing three or more (1-&gt;4)-alpha-linked D-glucose units.. The chain is Alpha-amylase-related protein (Amyrel) from Drosophila elegans (Fruit fly).